The chain runs to 795 residues: Phenylalanine--tRNA ligase beta subunit (795 aa).

Positions 39–149 (SGEFSGVVVA…ADAPIGVDIR (111 aa)) constitute a tRNA-binding domain. Positions 402–477 (PKQPIIRLRR…RIYGYNRIPN (76 aa)) constitute a B5 domain. Residues Asp455, Asp461, Glu464, and Glu465 each coordinate Mg(2+). Positions 701-794 (SKFPANNRDI…LAQRFQASLR (94 aa)) constitute an FDX-ACB domain.

The protein belongs to the phenylalanyl-tRNA synthetase beta subunit family. Type 1 subfamily. Tetramer of two alpha and two beta subunits. Mg(2+) is required as a cofactor.

The protein localises to the cytoplasm. It carries out the reaction tRNA(Phe) + L-phenylalanine + ATP = L-phenylalanyl-tRNA(Phe) + AMP + diphosphate + H(+). The polypeptide is Phenylalanine--tRNA ligase beta subunit (Haemophilus ducreyi (strain 35000HP / ATCC 700724)).